Consider the following 276-residue polypeptide: Radial spoke head protein 9 homolog (276 aa).

It belongs to the flagellar radial spoke RSP9 family. In terms of assembly, component of the axonemal radial spoke 1 (RS1) and 2 (RS2) complexes, at least composed of spoke head proteins RSPH1, RSPH3, RSPH9 and the cilia-specific component RSPH4A or sperm-specific component RSPH6A, spoke stalk proteins RSPH14, DNAJB13, DYDC1, ROPN1L and NME5, and the RS1 complex-specific anchor protein IQUB. Interacts with IQUB. Interacts with RSPH3B. Interacts with RSPH4A. Interacts with RSPH6A. Interacts with CFAP61. Interacts with LRRC23.

The protein localises to the cytoplasm. It localises to the cytoskeleton. Its subcellular location is the cilium axoneme. The protein resides in the flagellum axoneme. It is found in the cell projection. The protein localises to the kinocilium. Its function is as follows. Functions as part of axonemal radial spoke complexes that play an important part in the motility of sperm and cilia. Essential for both the radial spoke head assembly and the central pair microtubule stability in ependymal motile cilia. Required for motility of olfactory and neural cilia and for the structural integrity of ciliary axonemes in both 9+0 and 9+2 motile cilia. The chain is Radial spoke head protein 9 homolog (RSPH9) from Homo sapiens (Human).